An 89-amino-acid chain; its full sequence is Small ribosomal subunit protein uS15 (89 aa).

Belongs to the universal ribosomal protein uS15 family. Part of the 30S ribosomal subunit. Forms a bridge to the 50S subunit in the 70S ribosome, contacting the 23S rRNA.

In terms of biological role, one of the primary rRNA binding proteins, it binds directly to 16S rRNA where it helps nucleate assembly of the platform of the 30S subunit by binding and bridging several RNA helices of the 16S rRNA. Its function is as follows. Forms an intersubunit bridge (bridge B4) with the 23S rRNA of the 50S subunit in the ribosome. This chain is Small ribosomal subunit protein uS15, found in Proteus mirabilis (strain HI4320).